The following is a 189-amino-acid chain: uncharacterized protein (189 aa).

A signal peptide spans 1-19; the sequence is MNKLTILFLILALISVIYA. The tract at residues 24-189 is disordered; the sequence is PSSSEDSSSN…GSGSSGTVYY (166 aa). A compositionally biased stretch (low complexity) spans 25 to 69; the sequence is SSSEDSSSNDSNSQVTGSQSYSGSQSDSNSGSESHTINTGSSYSG. Positions 70–101 are enriched in gly residues; that stretch reads SGSGSSGISGGSGSGSGSGSGSGSGSGSGSGA. Positions 102–142 are enriched in low complexity; it reads VSGSQSGSGAVSGSQSGSGAVSGSQSGVQTGSQSGAGSASG. A compositionally biased stretch (polar residues) spans 144-157; sequence FTGNPSGSQSQEIN. The segment covering 165–183 has biased composition (gly residues); it reads SGSGAPTGAATGSGSGSGS.

This is an uncharacterized protein from Dictyostelium discoideum (Social amoeba).